Reading from the N-terminus, the 395-residue chain is RNA demethylase ALKBH5 (395 aa).

Disordered stretches follow at residues 1–28 (MAAA…AGSR) and 47–83 (AAEP…EEEA). N-acetylalanine is present on alanine 2. Lysine 58 participates in a covalent cross-link: Glycyl lysine isopeptide (Lys-Gly) (interchain with G-Cter in ubiquitin). Basic and acidic residues predominate over residues 60-83 (KYQEDSDPERSDYEEHQLQKEEEA). Residues serine 65 and serine 70 each carry the phosphoserine modification. Residues 68–117 (ERSDYEEHQLQKEEEARKVKSGIRQIRLFSQDECSKIEARIDEVVSRAEK) are a coiled coil. The residue at position 72 (tyrosine 72) is a Phosphotyrosine. A Glycyl lysine isopeptide (Lys-Gly) (interchain with G-Cter in SUMO1) cross-link involves residue lysine 87. Residue serine 88 is modified to Phosphoserine. The residue at position 133 (lysine 133) is an N6-acetyllysine. Tyrosine 140 is a catalytic residue. 2-oxoglutarate-binding residues include asparagine 194, tyrosine 196, and histidine 205. Cysteine 231 and cysteine 268 form a disulfide bridge. Lysine 236 is subject to N6-acetyllysine. Residues histidine 267 and arginine 278 each contribute to the 2-oxoglutarate site. Residues 294-395 (ETKSLSSSTL…PTRKVKMRRH (102 aa)) are disordered. A compositionally biased stretch (low complexity) spans 296–306 (KSLSSSTLPPS). Residue lysine 322 forms a Glycyl lysine isopeptide (Lys-Gly) (interchain with G-Cter in SUMO1) linkage. Serine 326 is modified (phosphoserine). A Glycyl lysine isopeptide (Lys-Gly) (interchain with G-Cter in SUMO2) cross-link involves residue lysine 329. Basic and acidic residues predominate over residues 329–350 (KADPDAAHRPRILEMDKEENRR). An Omega-N-methylarginine modification is found at arginine 360. 4 positions are modified to phosphoserine: serine 362, serine 372, serine 375, and serine 385.

This sequence belongs to the alkB family. As to quaternary structure, monomer. Interacts with RBM33; promoting desumoylation by SENP1 and recruitment to N(6)-methyladenosine-containing mRNAs. Interacts (when acetylated by KAT8) with PSPC1; interaction facilitates recognition of N(6)-methyladenosine (m6A) mRNA. Fe(2+) serves as cofactor. Phosphorylated at Ser-88 and Ser-326 in response to reactive oxygen species (ROS), promoting sumoylation and inactivation. Post-translationally, acetylated by KAT8 at Lys-236, promoting interaction with PSPC1, thereby facilitating recognition of N(6)-methyladenosine (m6A) mRNA by ALKBH5. Deacetylated at Lys-236 by HDAC7. In terms of processing, sumoylated at Lys-87 and Lys-322 by PIAS4 following phosphorylation at Ser-88 and Ser-326 in response to reactive oxygen species (ROS), inhibiting the RNA demethylase activity. Desumoylated by SENP1; relieving RNA demethylase inhibition, leading to N(6)-methyladenosine-containing mRNAs demethylation. Ubiquitinated at Lys-58 via 'Lys-48'-linked polyubiquitin chain, leading to its degradation by the proteasome. Deubiquitinated at Lys-58 by USP9X, promoting its stabilizazion.

The protein localises to the nucleus speckle. It carries out the reaction an N(6)-methyladenosine in mRNA + 2-oxoglutarate + O2 = an adenosine in mRNA + formaldehyde + succinate + CO2. RNA demethylase activity is inhibited following sumoylation. Inhibition is relieved following desumoylation. Functionally, dioxygenase that specifically demethylates N(6)-methyladenosine (m6A) RNA, the most prevalent internal modification of messenger RNA (mRNA) in higher eukaryotes. Demethylates RNA by oxidative demethylation, which requires molecular oxygen, alpha-ketoglutarate and iron. Demethylation of m6A mRNA affects mRNA processing, translation and export. Can also demethylate N(6)-methyladenosine in single-stranded DNA (in vitro). Required for the late meiotic and haploid phases of spermatogenesis by mediating m6A demethylation in spermatocytes and round spermatids: m6A demethylation of target transcripts is required for correct splicing and the production of longer 3'-UTR mRNAs in male germ cells. Involved in paraspeckle assembly, a nuclear membraneless organelle, by undergoing liquid-liquid phase separation. Paraspeckle assembly is coupled with m6A demethylation of RNAs, such as NEAT1 non-coding RNA. Also acts as a negative regulator of T-cell development: inhibits gamma-delta T-cell proliferation via demethylation of JAG1 and NOTCH2 transcripts. Inhibits regulatory T-cell (Treg) recruitment by mediating demethylation and destabilization of CCL28 mRNAs. The chain is RNA demethylase ALKBH5 (Alkbh5) from Rattus norvegicus (Rat).